A 260-amino-acid polypeptide reads, in one-letter code: DNA repair protein RecO (260 aa).

Belongs to the RecO family.

Functionally, involved in DNA repair and RecF pathway recombination. This is DNA repair protein RecO from Streptococcus suis (strain 98HAH33).